A 101-amino-acid polypeptide reads, in one-letter code: Small ribosomal subunit protein uS10 (101 aa).

The protein belongs to the universal ribosomal protein uS10 family. In terms of assembly, part of the 30S ribosomal subunit.

Its function is as follows. Involved in the binding of tRNA to the ribosomes. In Phocaeicola vulgatus (strain ATCC 8482 / DSM 1447 / JCM 5826 / CCUG 4940 / NBRC 14291 / NCTC 11154) (Bacteroides vulgatus), this protein is Small ribosomal subunit protein uS10.